We begin with the raw amino-acid sequence, 280 residues long: 2,3,4,5-tetrahydropyridine-2,6-dicarboxylate N-succinyltransferase (280 aa).

2 residues coordinate substrate: Arg-107 and Asp-144.

The protein belongs to the transferase hexapeptide repeat family. Homotrimer.

The protein resides in the cytoplasm. The catalysed reaction is (S)-2,3,4,5-tetrahydrodipicolinate + succinyl-CoA + H2O = (S)-2-succinylamino-6-oxoheptanedioate + CoA. It participates in amino-acid biosynthesis; L-lysine biosynthesis via DAP pathway; LL-2,6-diaminopimelate from (S)-tetrahydrodipicolinate (succinylase route): step 1/3. This chain is 2,3,4,5-tetrahydropyridine-2,6-dicarboxylate N-succinyltransferase, found in Paramagnetospirillum magneticum (strain ATCC 700264 / AMB-1) (Magnetospirillum magneticum).